Reading from the N-terminus, the 224-residue chain is 25 kDa integral membrane protein (224 aa).

The Cytoplasmic portion of the chain corresponds to 1–12 (MKLSFTKVSLTN). The helical transmembrane segment at 13 to 33 (ILILFNCLFIIFSMIVLTFGV) threads the bilayer. Over 34-52 (IPQIYLLKFANILHGVRPS) the chain is Extracellular. The helical transmembrane segment at 53–73 (IFPIVCFTGSFVIIVACVGII) threads the bilayer. Topologically, residues 74–80 (GLMKGGK) are cytoplasmic. The chain crosses the membrane as a helical span at residues 81–101 (CLLTMHIIALIIATIIDISTA). Over 102-189 (TLSAIKQNEF…LNKYVRYYID (88 aa)) the chain is Extracellular. N-linked (GlcNAc...) asparagine glycosylation occurs at Asn-120. The helical transmembrane segment at 190–210 (ILIYLCFIFGFIKLIYSLFTF) threads the bilayer. Residues 211-224 (TQRQRIFSEKTPVA) are Cytoplasmic-facing.

The protein belongs to the tetraspanin (TM4SF) family.

It localises to the membrane. The protein is 25 kDa integral membrane protein of Schistosoma japonicum (Blood fluke).